The following is a 288-amino-acid chain: Solute carrier family 25 member 45 (288 aa).

3 Solcar repeats span residues 1-83, 97-191, and 199-286; these read MPVE…TLLA, PSYT…LCRQ, and PSSA…LLRL. 6 consecutive transmembrane segments (helical) span residues 6-26, 58-78, 102-122, 166-186, 202-222, and 266-286; these read FVAG…FDTV, GMSF…GVYS, IFIA…PFDL, GSWA…VTYE, ATVL…ATPF, and SARA…LLRL.

The protein belongs to the mitochondrial carrier (TC 2.A.29) family. In terms of tissue distribution, widely expressed, with highest levels in testis, liver and kidney and low levels in brain, including cortex, cerebellum, hippocampus and hypothalamus, and heart.

The protein localises to the mitochondrion inner membrane. This Mus musculus (Mouse) protein is Solute carrier family 25 member 45 (Slc25a45).